A 206-amino-acid chain; its full sequence is Large ribosomal subunit protein uL4 (206 aa).

This sequence belongs to the universal ribosomal protein uL4 family. In terms of assembly, part of the 50S ribosomal subunit.

One of the primary rRNA binding proteins, this protein initially binds near the 5'-end of the 23S rRNA. It is important during the early stages of 50S assembly. It makes multiple contacts with different domains of the 23S rRNA in the assembled 50S subunit and ribosome. Functionally, forms part of the polypeptide exit tunnel. This is Large ribosomal subunit protein uL4 from Nitrobacter winogradskyi (strain ATCC 25391 / DSM 10237 / CIP 104748 / NCIMB 11846 / Nb-255).